The primary structure comprises 156 residues: ATP synthase subunit b (156 aa).

Residues Leu-7 to Pro-27 form a helical membrane-spanning segment.

It belongs to the ATPase B chain family. F-type ATPases have 2 components, F(1) - the catalytic core - and F(0) - the membrane proton channel. F(1) has five subunits: alpha(3), beta(3), gamma(1), delta(1), epsilon(1). F(0) has three main subunits: a(1), b(2) and c(10-14). The alpha and beta chains form an alternating ring which encloses part of the gamma chain. F(1) is attached to F(0) by a central stalk formed by the gamma and epsilon chains, while a peripheral stalk is formed by the delta and b chains.

The protein resides in the cell inner membrane. F(1)F(0) ATP synthase produces ATP from ADP in the presence of a proton or sodium gradient. F-type ATPases consist of two structural domains, F(1) containing the extramembraneous catalytic core and F(0) containing the membrane proton channel, linked together by a central stalk and a peripheral stalk. During catalysis, ATP synthesis in the catalytic domain of F(1) is coupled via a rotary mechanism of the central stalk subunits to proton translocation. Functionally, component of the F(0) channel, it forms part of the peripheral stalk, linking F(1) to F(0). The protein is ATP synthase subunit b of Coxiella burnetii (strain CbuK_Q154) (Coxiella burnetii (strain Q154)).